We begin with the raw amino-acid sequence, 240 residues long: SURF1-like protein (240 aa).

The next 2 helical transmembrane spans lie at 7-23 (VFITFTILISLGFWQLS) and 201-219 (YALTWFGLAISLIVIYVIY).

Belongs to the SURF1 family.

The protein resides in the cell membrane. This is SURF1-like protein from Rickettsia conorii (strain ATCC VR-613 / Malish 7).